The primary structure comprises 353 residues: Phosphoribosylformylglycinamidine cyclo-ligase (353 aa).

The protein belongs to the AIR synthase family.

Its subcellular location is the cytoplasm. The catalysed reaction is 2-formamido-N(1)-(5-O-phospho-beta-D-ribosyl)acetamidine + ATP = 5-amino-1-(5-phospho-beta-D-ribosyl)imidazole + ADP + phosphate + H(+). Its pathway is purine metabolism; IMP biosynthesis via de novo pathway; 5-amino-1-(5-phospho-D-ribosyl)imidazole from N(2)-formyl-N(1)-(5-phospho-D-ribosyl)glycinamide: step 2/2. This is Phosphoribosylformylglycinamidine cyclo-ligase from Magnetococcus marinus (strain ATCC BAA-1437 / JCM 17883 / MC-1).